The chain runs to 158 residues: Cyclic pyranopterin monophosphate synthase (158 aa).

Substrate is bound by residues leucine 76–histidine 78 and methionine 114–glutamate 115. Aspartate 129 is an active-site residue.

The protein belongs to the MoaC family. In terms of assembly, homohexamer; trimer of dimers.

The enzyme catalyses (8S)-3',8-cyclo-7,8-dihydroguanosine 5'-triphosphate = cyclic pyranopterin phosphate + diphosphate. The protein operates within cofactor biosynthesis; molybdopterin biosynthesis. Functionally, catalyzes the conversion of (8S)-3',8-cyclo-7,8-dihydroguanosine 5'-triphosphate to cyclic pyranopterin monophosphate (cPMP). This chain is Cyclic pyranopterin monophosphate synthase, found in Shewanella sediminis (strain HAW-EB3).